Here is a 179-residue protein sequence, read N- to C-terminus: Large ribosomal subunit protein uL5 (179 aa).

The protein belongs to the universal ribosomal protein uL5 family. Part of the 50S ribosomal subunit; part of the 5S rRNA/L5/L18/L25 subcomplex. Contacts the 5S rRNA and the P site tRNA. Forms a bridge to the 30S subunit in the 70S ribosome.

This is one of the proteins that bind and probably mediate the attachment of the 5S RNA into the large ribosomal subunit, where it forms part of the central protuberance. In the 70S ribosome it contacts protein S13 of the 30S subunit (bridge B1b), connecting the 2 subunits; this bridge is implicated in subunit movement. Contacts the P site tRNA; the 5S rRNA and some of its associated proteins might help stabilize positioning of ribosome-bound tRNAs. This chain is Large ribosomal subunit protein uL5, found in Haemophilus influenzae (strain 86-028NP).